The chain runs to 123 residues: Small ribosomal subunit protein uS12 (123 aa).

A 3-methylthioaspartic acid modification is found at aspartate 89.

This sequence belongs to the universal ribosomal protein uS12 family. Part of the 30S ribosomal subunit. Contacts proteins S8 and S17. May interact with IF1 in the 30S initiation complex.

Its function is as follows. With S4 and S5 plays an important role in translational accuracy. Interacts with and stabilizes bases of the 16S rRNA that are involved in tRNA selection in the A site and with the mRNA backbone. Located at the interface of the 30S and 50S subunits, it traverses the body of the 30S subunit contacting proteins on the other side and probably holding the rRNA structure together. The combined cluster of proteins S8, S12 and S17 appears to hold together the shoulder and platform of the 30S subunit. This is Small ribosomal subunit protein uS12 from Rhodopseudomonas palustris (strain BisA53).